The sequence spans 259 residues: MILVIDVGNTNCTVGVYEKQKLLKHWRMTTDRHRTSDELGMTVLNFFSYANLTPSDIQGIIISSVVPPIMHAMETMCVRYFNIRPLIVGPGIKTGLNVKVDNPREIGSDRIVNAVAASEEYGTPIIVVDFGTATTFCYIDELGAYQGGAIAPGIMISTEALYNRAAKLPRVDIAESNQIIGKSTVSSMQAGIFYGFVGQCEGIIAEMKKQSNSNPVVVATGGLARMITEKSSAVDILDPFLTLKGLELLYRRNKPTTEK.

Residue 6 to 13 (DVGNTNCT) participates in ATP binding. 107-110 (GSDR) provides a ligand contact to substrate. Catalysis depends on Asp-109, which acts as the Proton acceptor. Asp-129 lines the K(+) pocket. Thr-132 is an ATP binding site. Thr-184 serves as a coordination point for substrate.

The protein belongs to the type III pantothenate kinase family. Homodimer. Requires NH4(+) as cofactor. K(+) is required as a cofactor.

The protein localises to the cytoplasm. It carries out the reaction (R)-pantothenate + ATP = (R)-4'-phosphopantothenate + ADP + H(+). It participates in cofactor biosynthesis; coenzyme A biosynthesis; CoA from (R)-pantothenate: step 1/5. Functionally, catalyzes the phosphorylation of pantothenate (Pan), the first step in CoA biosynthesis. The polypeptide is Type III pantothenate kinase (Listeria welshimeri serovar 6b (strain ATCC 35897 / DSM 20650 / CCUG 15529 / CIP 8149 / NCTC 11857 / SLCC 5334 / V8)).